Reading from the N-terminus, the 81-residue chain is CLAVATA3/ESR (CLE)-related protein 25 (81 aa).

Residues 1 to 30 (MGGNGIRALVGVIASLGLIVFLLVGILANS) form the signal peptide. Residues 57–81 (KRKVPNGPDPIHNRKAETSRRPPRV) are disordered. Hydroxyproline occurs at positions 61 and 64. A glycan (O-linked (Ara...) hydroxyproline) is linked at Pro64. Positions 67 to 81 (IHNRKAETSRRPPRV) are enriched in basic and acidic residues.

This sequence belongs to the CLV3/ESR signal peptide family. The O-glycosylation (arabinosylation) of the hydroxyproline Pro-64 enhances binding affinity of the CLE25p peptide for its receptor. In terms of tissue distribution, mostly expressed in flowers and siliques, and, to a lower extent, in roots, stems, apex, seedlings, leaves and pollen.

The protein resides in the secreted. The protein localises to the extracellular space. In terms of biological role, extracellular signal peptide that regulates cell fate. Represses root apical meristem maintenance. Regulates the transition of protophloem cells from proliferation to differentiation, thus impinging on postembryonic growth capacity of the root meristem; this signaling pathway requires CRN and CLV2. The sequence is that of CLAVATA3/ESR (CLE)-related protein 25 from Arabidopsis thaliana (Mouse-ear cress).